Reading from the N-terminus, the 10061-residue chain is MATH and LRR domain-containing protein PFE0570w (10061 aa).

Disordered stretches follow at residues 166 to 210, 244 to 471, and 1004 to 1170; these read DMDN…EKKN, NNSD…NDIN, and DDQK…DTSF. The segment covering 169 to 179 has biased composition (polar residues); sequence NNPNNHVSNNG. Low complexity predominate over residues 193 to 205; the sequence is TSNSIHKNNNTNI. The segment covering 270-282 has biased composition (basic and acidic residues); the sequence is KKSDNNNDKKNDD. The segment covering 285–320 has biased composition (low complexity); it reads NNNNNNNNNNNNNNNNNDNHVCTSNNQPNTINKQNN. Polar residues predominate over residues 328-338; sequence DQNGRTKITPQ. Positions 338–366 form a coiled coil; sequence QNVNQKEKEIKNVVKEKNNFNREEKDITN. The span at 342-365 shows a compositional bias: basic and acidic residues; the sequence is QKEKEIKNVVKEKNNFNREEKDIT. Residues 366-375 are compositionally biased toward acidic residues; that stretch reads NSDDYDENST. Composition is skewed to polar residues over residues 376-389 and 421-437; these read DESC…TSSE and VPSN…SAEN. A coiled-coil region spans residues 431–469; the sequence is NVKSAENCNKEKKKKKKKKKKELNNDNKDNTLNNETMND. Over residues 441–451 the composition is skewed to basic residues; the sequence is EKKKKKKKKKK. Over residues 460–471 the composition is skewed to low complexity; sequence NTLNNETMNDIN. Over residues 1025 to 1037 the composition is skewed to basic and acidic residues; that stretch reads NEEKPNVNKEGNI. A compositionally biased stretch (low complexity) spans 1047-1057; it reads NKNKNNNNNNN. Basic and acidic residues predominate over residues 1058-1132; the sequence is DKNDKNDKND…KKKKNGKEQN (75 aa). Residues 1133-1165 show a composition bias toward acidic residues; it reads EDSTESDDESSVIDDNYIDDDSCDCDSESDSID. The 131-residue stretch at 1328–1458 folds into the MATH domain; that stretch reads NGKIELYIPN…SGGLLIKGKV (131 aa). The segment at 1651–1698 is disordered; the sequence is GGNLQNEQKGDEDVKKEDVKKENVNKEEIKNGNNNNNNDENENEVDDN. Residues 1658-1680 are compositionally biased toward basic and acidic residues; that stretch reads QKGDEDVKKEDVKKENVNKEEIK. The stretch at 1916 to 1948 forms a coiled coil; it reads NYLSNLNKVKININDLNNNIVDVNNSIHNIEKE. Over residues 1973–1995 the composition is skewed to basic and acidic residues; that stretch reads HKETSSIQNKGKEKSNNNIKSDD. Disordered stretches follow at residues 1973–1998, 2155–2245, 2427–2566, and 3120–3139; these read HKET…DNNN, LNKS…PSYK, YSDD…NNIK, and SNET…NEMK. Positions 2216–2228 are enriched in acidic residues; it reads NNDDKDDDDDDSY. Residues 2235-2245 show a composition bias toward basic and acidic residues; it reads SDGKKNDPSYK. A compositionally biased stretch (low complexity) spans 2475–2484; the sequence is NNNNNNNNMM. Composition is skewed to basic and acidic residues over residues 2487 to 2496 and 2505 to 2527; these read DDNKVNKNEE and QIKE…RNED. Low complexity-rich tracts occupy residues 2552–2564 and 3121–3133; these read NNNN…NNNN and NETN…NRTN. Residues 2555–2580 are a coiled coil; it reads NNNNNNNNNNIKRLDDSYNKLLKNKN. The chain crosses the membrane as a helical span at residues 3398 to 3418; that stretch reads KLILKKIFMYLNIICMIIKYI. Disordered regions lie at residues 3802–3826, 3847–3890, and 3919–3953; these read STND…YSKK, LTSG…DNNN, and ESND…EKKS. Residues 3809 to 3822 show a composition bias toward basic and acidic residues; sequence VDRSDDSESNDDKK. A compositionally biased stretch (low complexity) spans 3851–3890; sequence NSSSKNSKKNSNNESIQMDNTNNSNSNNNNKNDNNNDNNN. Positions 3926 to 3941 are enriched in polar residues; sequence KNQNIQSNEQSVTPNR. The segment covering 3942 to 3953 has biased composition (basic and acidic residues); sequence NIEENKDHEKKS. A coiled-coil region spans residues 3977–4001; the sequence is EHLGNATAVLNILQKKLENEELKKL. Basic and acidic residues predominate over residues 4039–4065; the sequence is VSAHKEKNVKTDSSDDKKKKEDNENNN. 6 disordered regions span residues 4039-4074, 4155-4180, 4352-4414, 4919-4943, 4991-5030, and 5179-5207; these read VSAH…IIHN, KGNN…NNMG, SNNN…NNNN, NKRK…DNDN, DGLN…KNEK, and SKIA…KSNL. Residues 4157–4178 show a composition bias toward low complexity; sequence NNSKDNNNNNNNNNNNNNNKNN. A coiled-coil region spans residues 4399-4424; that stretch reads NNNNNNNNNNNNNNNNVNKEIIKLNS. Composition is skewed to low complexity over residues 4929–4943, 5004–5019, and 5185–5202; these read NNNN…DNDN, NMNN…NNSN, and NGNN…NNNN. Positions 5006–5046 form a coiled coil; it reads NNVKNKNNNNNNSNNKRKKNEKNEKIDKIEQFLHESELEKD. Coiled coils occupy residues 5486–5563, 5728–5810, and 5900–6022; these read NNNN…NIYE, DVLK…DKEE, and MNND…INNY. 3 stretches are compositionally biased toward basic and acidic residues: residues 5716–5732, 5738–5811, and 5909–5953; these read KDAK…VLKD, SNKE…KEEP, and NKNK…KKDN. 7 disordered regions span residues 5716–5816, 5892–6009, 6123–6142, 6299–6338, 6722–6760, 7585–7730, and 7744–7787; these read KDAK…QINE, EIIN…KKLK, KSET…VDGK, NDSI…DKGE, NMNN…NNNI, EDML…VEEK, and DLLS…KKSS. Residues 5954–5968 show a composition bias toward low complexity; that stretch reads NNSNNNNNNNNLSNN. The span at 5969–5978 shows a compositional bias: acidic residues; that stretch reads GEEDPNDSDS. The span at 5991–6003 shows a compositional bias: basic and acidic residues; it reads NKNINDDSDDNNK. Over residues 6129–6138 the composition is skewed to polar residues; that stretch reads SNKNVESNDN. 2 stretches are compositionally biased toward low complexity: residues 6314–6333 and 6722–6759; these read SNSN…NNNN and NMNN…NNNN. A coiled-coil region spans residues 6719–6743; that stretch reads NMNNMNNNNNNNNNNNNNNNNNNNN. Over residues 7585-7599 the composition is skewed to basic and acidic residues; the sequence is EDMLHSKKTDVIQHG. A compositionally biased stretch (acidic residues) spans 7600–7685; the sequence is DEEEDDEEDD…EHINEEEQED (86 aa). Coiled coils occupy residues 7601–7637, 7710–7813, 7934–7961, and 8217–8241; these read EEED…DIED, NTKI…NKNE, KTDE…IDNE, and NINN…GKRE. A compositionally biased stretch (basic residues) spans 7749 to 7765; that stretch reads SKKKNHKDKRNASKNKN. Positions 7766-7786 are enriched in basic and acidic residues; it reads KNKDILKKNENNINDEKEKKS. 3 disordered regions span residues 8189-8252, 8293-8380, and 8474-8497; these read ETGG…GGEE, GKVS…IIMS, and KKKN…MDEE. The span at 8218-8242 shows a compositional bias: basic and acidic residues; it reads INNKEKETNKNEEQQQGEAEGKREG. Residues 8243–8252 show a composition bias toward acidic residues; that stretch reads EGEEGEGGEE. Residues 8305–8314 are compositionally biased toward basic and acidic residues; the sequence is LLNDKEHEKD. The span at 8315 to 8363 shows a compositional bias: acidic residues; that stretch reads NEDNDEDNDEDDDDEDDDEDDEDDDDDDDDDDDDDDDDDYDEDYDEDYD. Basic and acidic residues predominate over residues 8364 to 8374; that stretch reads EKLVENKKNER. The segment covering 8478–8492 has biased composition (low complexity); the sequence is YSNNNIYNNNSSNKV. Coiled-coil stretches lie at residues 8644-8697, 8882-8907, and 9219-9247; these read SETL…ELNN, QYLE…VDNY, and IDMK…SNNN. Disordered regions lie at residues 9759 to 9779, 9891 to 9926, and 9985 to 10061; these read TIPR…NNNS, SNTS…SSSN, and KNNS…NNIY. 3 stretches are compositionally biased toward low complexity: residues 9764–9779, 9899–9926, and 9986–10022; these read NTTT…NNNS, NSSN…SSSN, and NNSI…NNNT. A compositionally biased stretch (polar residues) spans 10031 to 10041; that stretch reads IFQQNQNHSDT. The span at 10042–10061 shows a compositional bias: low complexity; the sequence is NNNNNNNNKNNSNNNNNNIY.

The protein resides in the membrane. This chain is MATH and LRR domain-containing protein PFE0570w, found in Plasmodium falciparum (isolate 3D7).